We begin with the raw amino-acid sequence, 784 residues long: PWWP domain-containing protein 2A (784 aa).

Disordered stretches follow at residues 1–32 (MAAV…LGRL), 244–272 (KPVE…PEDV), 463–567 (AKEK…EMQD), and 605–654 (SSSA…SSKE). The segment covering 244–266 (KPVESIQEESKSFHEEPLVKSEE) has biased composition (basic and acidic residues). Positions 536–556 (TRYSATRSAGETPSEIQSPSN) are enriched in polar residues. The segment covering 605–614 (SSSASVCSSD) has biased composition (low complexity). Positions 684–744 (VGDIVWAKIY…LSQLTPFLEN (61 aa)) constitute a PWWP domain.

The protein resides in the nucleus. H2A.Z-specific chromatin binding protein which plays an important role in the neural crest cell differentiation and/or migration during early development and is essential for the development of the head and eye. Acts as an adapter between distinct nucleosome components (H3K36me3 or H2A.Z) and chromatin-modifying complexes, contributing to the regulation of the levels of histone acetylation at actively transcribed genes. The polypeptide is PWWP domain-containing protein 2A (pwwp2a) (Xenopus tropicalis (Western clawed frog)).